We begin with the raw amino-acid sequence, 296 residues long: Polyamine aminopropyltransferase (296 aa).

One can recognise a PABS domain in the interval 5-238; that stretch reads ELWYETLHAN…GIMTFAWATQ (234 aa). Gln33 contributes to the S-methyl-5'-thioadenosine binding site. Positions 64 and 88 each coordinate spermidine. Residues Glu108 and 140 to 141 each bind S-methyl-5'-thioadenosine; that span reads DG. The Proton acceptor role is filled by Asp158. 158-161 serves as a coordination point for spermidine; sequence DCTD. Pro165 provides a ligand contact to S-methyl-5'-thioadenosine.

This sequence belongs to the spermidine/spermine synthase family. Homodimer or homotetramer.

The protein localises to the cytoplasm. The catalysed reaction is S-adenosyl 3-(methylsulfanyl)propylamine + putrescine = S-methyl-5'-thioadenosine + spermidine + H(+). It participates in amine and polyamine biosynthesis; spermidine biosynthesis; spermidine from putrescine: step 1/1. Functionally, catalyzes the irreversible transfer of a propylamine group from the amino donor S-adenosylmethioninamine (decarboxy-AdoMet) to putrescine (1,4-diaminobutane) to yield spermidine. The sequence is that of Polyamine aminopropyltransferase from Yersinia pseudotuberculosis serotype O:3 (strain YPIII).